The sequence spans 56 residues: MLRAAIAFFIIAIVAYIFGASGVAGMSVEIGRILLFVFLALAIISFVINLVSGRKP.

A run of 2 helical transmembrane segments spans residues 4-24 (AAIA…SGVA) and 33-53 (ILLF…LVSG).

It belongs to the UPF0391 family.

The protein resides in the cell membrane. The polypeptide is UPF0391 membrane protein Bd1438 (Bdellovibrio bacteriovorus (strain ATCC 15356 / DSM 50701 / NCIMB 9529 / HD100)).